The following is a 317-amino-acid chain: Insulin-like growth factor-binding protein 2 (317 aa).

An N-terminal signal peptide occupies residues 1-33; that stretch reads MQPRLGGPALLLLPPLLLLLLLGAGGGDCGARA. Residues 35 to 126 form the IGFBP N-terminal domain; it reads VLFRCPPCTP…VHGEGTCEKH (92 aa). 6 disulfides stabilise this stretch: Cys-39/Cys-76, Cys-42/Cys-78, Cys-50/Cys-79, Cys-68/Cys-82, Cys-90/Cys-103, and Cys-97/Cys-123. Disordered stretches follow at residues 125 to 151 and 189 to 218; these read KHGD…GGQV and EQHR…ARTP. Residues 216 to 298 enclose the Thyroglobulin type-1 domain; that stretch reads RTPCQQELDQ…APTIRGDPEC (83 aa). Disulfide bonds link Cys-219/Cys-253, Cys-264/Cys-275, and Cys-277/Cys-298. The Cell attachment site signature appears at 293-295; that stretch reads RGD.

Interacts with IGF1. Interacts with IGF2. Interacts (via RGD motif) with integrin alpha5/ITGA5; this interaction induces cell migration, adhesion or apoptosis according to the context. Interacts with PTPRB; this interaction leads to PTPRB dimerization and inactivation. Cleaved by MMP9 leading to release of free IGF2 from IGFBP2-IGF2 complex, which contributes to enhance the motility and the growth of astrocytes. In terms of processing, O-glycosylated. In terms of tissue distribution, expressed in abundance in selected adult tissues, namely liver, kidney, adrenal, pituitary and choroid plexus.

It is found in the secreted. Multifunctional protein that plays a critical role in regulating the availability of IGFs such as IGF1 and IGF2 to their receptors and thereby regulates IGF-mediated cellular processes including proliferation, differentiation, and apoptosis in a cell-type specific manner. Functions coordinately with receptor protein tyrosine phosphatase beta/PTPRB and the IGF1 receptor to regulate IGF1-mediated signaling by stimulating the phosphorylation of PTEN leading to its inactivation and AKT1 activation. Plays a positive role in cell migration via interaction with integrin alpha5/ITGA5 through an RGD motif. Additionally, interaction with ITGA5/ITGB1 enhances the adhesion of endothelial progenitor cells to endothelial cells. Upon mitochondrial damage, facilitates apoptosis with ITGA5 of podocytes, and then activates the phosphorylation of focal adhesion kinase (FAK)-mediated mitochondrial injury. This chain is Insulin-like growth factor-binding protein 2 (IGFBP2), found in Ovis aries (Sheep).